A 118-amino-acid polypeptide reads, in one-letter code: Basic phospholipase A2 PA-12C (118 aa).

7 cysteine pairs are disulfide-bonded: C11-C71, C27-C117, C29-C45, C44-C98, C51-C91, C60-C84, and C78-C89. Ca(2+)-binding residues include Y28, G30, and G32. The active site involves H48. D49 is a Ca(2+) binding site. D92 is a catalytic residue.

It belongs to the phospholipase A2 family. Group I subfamily. D49 sub-subfamily. It depends on Ca(2+) as a cofactor. Expressed by the venom gland.

The protein localises to the secreted. It carries out the reaction a 1,2-diacyl-sn-glycero-3-phosphocholine + H2O = a 1-acyl-sn-glycero-3-phosphocholine + a fatty acid + H(+). Its function is as follows. PLA2 catalyzes the calcium-dependent hydrolysis of the 2-acyl groups in 3-sn-phosphoglycerides. In Pseudechis australis (Mulga snake), this protein is Basic phospholipase A2 PA-12C.